The following is a 1370-amino-acid chain: Zinc finger MYM-type protein 3 (1370 aa).

Low complexity-rich tracts occupy residues 1-12 (MDPSDFPSPFDP), 40-56 (APSR…SSGA), and 130-146 (GAGA…EPLA). Disordered stretches follow at residues 1–73 (MDPS…PGGV) and 85–310 (GLLY…MGTK). The segment covering 227-255 (TGKEIEKPPERVQKRSERVRRAEPPKPEV) has biased composition (basic and acidic residues). 2 positions are modified to phosphoserine: Ser265 and Ser269. Residues 265–281 (SDEDSDAMVDDPNDEDF) are compositionally biased toward acidic residues. Residues Lys310, Lys322, and Lys330 each participate in a glycyl lysine isopeptide (Lys-Gly) (interchain with G-Cter in SUMO2) cross-link. 9 MYM-type zinc fingers span residues 334-368 (QLFC…TKDS), 380-424 (HEFC…LHEV), 431-466 (HRLC…RPGG), 479-513 (KRFC…FEML), 523-561 (SLFC…PCYY), 569-606 (YQFC…KPEV), 614-648 (FQFC…HEKL), 655-694 (KSFC…GVTE), and 701-735 (WDFC…LETI). A compositionally biased stretch (polar residues) spans 761-789 (NLDTQSGPESLLNSQSSESKPQTPSQTKV). The disordered stretch occupies residues 761–831 (NLDTQSGPES…PPPPATPRKN (71 aa)). Glycyl lysine isopeptide (Lys-Gly) (interchain with G-Cter in SUMO2) cross-links involve residues Lys780 and Lys788. Basic and acidic residues predominate over residues 790 to 799 (ENNHTVRTPD). Thr797 carries the post-translational modification Phosphothreonine. Lys806 is covalently cross-linked (Glycyl lysine isopeptide (Lys-Gly) (interchain with G-Cter in SUMO2)). Residues 816 to 827 (VPTPPPPPPPAT) show a composition bias toward pro residues. Residues Thr818 and Thr827 each carry the phosphothreonine modification. Residues Lys848, Lys862, Lys921, and Lys1276 each participate in a glycyl lysine isopeptide (Lys-Gly) (interchain with G-Cter in SUMO2) cross-link.

May be a component of a BHC histone deacetylase complex that contains HDAC1, HDAC2, HMG20B/BRAF35, KDM1A, RCOR1/CoREST, PHF21A/BHC80, ZMYM2, ZNF217, ZMYM3, GSE1 and GTF2I. Ubiquitously expressed in all embryonic stages and adult tissues.

The protein localises to the nucleus. Plays a role in the regulation of cell morphology and cytoskeletal organization. This chain is Zinc finger MYM-type protein 3 (Zmym3), found in Mus musculus (Mouse).